A 551-amino-acid chain; its full sequence is Arginine--tRNA ligase (551 aa).

The 'HIGH' region signature appears at 125–135 (ANPTGPLHIGH).

The protein belongs to the class-I aminoacyl-tRNA synthetase family. In terms of assembly, monomer.

Its subcellular location is the cytoplasm. The catalysed reaction is tRNA(Arg) + L-arginine + ATP = L-arginyl-tRNA(Arg) + AMP + diphosphate. The sequence is that of Arginine--tRNA ligase from Nitratidesulfovibrio vulgaris (strain DP4) (Desulfovibrio vulgaris).